Reading from the N-terminus, the 923-residue chain is Periplasmic nitrate reductase (923 aa).

The segment at residues 1–30 (MNRRDFIKNTAIASAASVAGLSVPSSMLGA) is a signal peptide (tat-type signal). A 4Fe-4S Mo/W bis-MGD-type domain is found at 34 to 90 (WKWDKAVCRFCGTGCGIMIARKDGKIVATKGDPAAPVNRGLNCIKGYFNAKIMYGED). [4Fe-4S] cluster is bound by residues cysteine 41, cysteine 44, cysteine 48, and cysteine 76. Residues lysine 78, glutamine 146, asparagine 171, cysteine 175, 208 to 215 (WGANMAEM), methionine 416, glutamine 420, asparagine 526, 551 to 552 (SD), lysine 574, aspartate 601, and 813 to 822 (TGRVLEHWHS) contribute to the Mo-bis(molybdopterin guanine dinucleotide) site. Residue tryptophan 889 coordinates substrate. Mo-bis(molybdopterin guanine dinucleotide) is bound by residues asparagine 897 and lysine 914.

This sequence belongs to the prokaryotic molybdopterin-containing oxidoreductase family. NasA/NapA/NarB subfamily. In terms of assembly, component of the periplasmic nitrate reductase NapAB complex composed of NapA and NapB. Requires [4Fe-4S] cluster as cofactor. The cofactor is Mo-bis(molybdopterin guanine dinucleotide). Post-translationally, predicted to be exported by the Tat system. The position of the signal peptide cleavage has not been experimentally proven.

Its subcellular location is the periplasm. The enzyme catalyses 2 Fe(II)-[cytochrome] + nitrate + 2 H(+) = 2 Fe(III)-[cytochrome] + nitrite + H2O. Catalytic subunit of the periplasmic nitrate reductase complex NapAB. Receives electrons from NapB and catalyzes the reduction of nitrate to nitrite. This chain is Periplasmic nitrate reductase, found in Campylobacter jejuni subsp. jejuni serotype O:23/36 (strain 81-176).